The primary structure comprises 88 residues: DNA-directed RNA polymerase subunit omega (88 aa).

It belongs to the RNA polymerase subunit omega family. As to quaternary structure, the RNAP catalytic core consists of 2 alpha, 1 beta, 1 beta' and 1 omega subunit. When a sigma factor is associated with the core the holoenzyme is formed, which can initiate transcription.

The catalysed reaction is RNA(n) + a ribonucleoside 5'-triphosphate = RNA(n+1) + diphosphate. Promotes RNA polymerase assembly. Latches the N- and C-terminal regions of the beta' subunit thereby facilitating its interaction with the beta and alpha subunits. This chain is DNA-directed RNA polymerase subunit omega, found in Anaeromyxobacter dehalogenans (strain 2CP-1 / ATCC BAA-258).